The following is a 268-amino-acid chain: Probable membrane transporter protein HI_0806 (268 aa).

A run of 8 helical transmembrane segments spans residues 6–26, 46–66, 79–99, 101–121, 147–167, 178–198, 212–232, and 248–268; these read IFIL…FGIG, VISA…LLFF, ILWS…SFYF, TAII…KTFL, GGGL…APLV, IAVY…YGYL, LGLN…MSFF, and LLAI…FVFH.

Belongs to the 4-toluene sulfonate uptake permease (TSUP) (TC 2.A.102) family.

It localises to the cell membrane. The protein is Probable membrane transporter protein HI_0806 of Haemophilus influenzae (strain ATCC 51907 / DSM 11121 / KW20 / Rd).